A 351-amino-acid chain; its full sequence is Apolipoprotein L4 (351 aa).

An N-terminal signal peptide occupies residues 1–21 (MEGAALLKIFVVCIWVQQNHP).

The protein belongs to the apolipoprotein L family. Widely expressed; the highest levels are in spinal cord, placenta, adrenal gland; also detected in spleen, bone marrow, uterus, trachea, mammary gland and testis; levels are low in brain, heart and pancreas.

The protein localises to the secreted. Functionally, may play a role in lipid exchange and transport throughout the body. May participate in reverse cholesterol transport from peripheral cells to the liver. This chain is Apolipoprotein L4 (APOL4), found in Homo sapiens (Human).